Reading from the N-terminus, the 821-residue chain is Leucine--tRNA ligase (821 aa).

The short motif at 44–54 is the 'HIGH' region element; the sequence is PYPSGRIHMGH. The 'KMSKS' region motif lies at 589–593; the sequence is KMSKS. Lysine 592 is an ATP binding site.

Belongs to the class-I aminoacyl-tRNA synthetase family.

Its subcellular location is the cytoplasm. It carries out the reaction tRNA(Leu) + L-leucine + ATP = L-leucyl-tRNA(Leu) + AMP + diphosphate. This is Leucine--tRNA ligase from Campylobacter concisus (strain 13826).